Consider the following 337-residue polypeptide: 1-aminocyclopropane-1-carboxylate deaminase (337 aa).

Lysine 50 is subject to N6-(pyridoxal phosphate)lysine.

Belongs to the ACC deaminase/D-cysteine desulfhydrase family. Homotrimer. The cofactor is pyridoxal 5'-phosphate.

It carries out the reaction 1-aminocyclopropane-1-carboxylate + H2O = 2-oxobutanoate + NH4(+). Functionally, catalyzes a cyclopropane ring-opening reaction, the irreversible conversion of 1-aminocyclopropane-1-carboxylate (ACC) to ammonia and alpha-ketobutyrate. Allows growth on ACC as a nitrogen source. The sequence is that of 1-aminocyclopropane-1-carboxylate deaminase from Mesorhizobium japonicum (strain LMG 29417 / CECT 9101 / MAFF 303099) (Mesorhizobium loti (strain MAFF 303099)).